An 86-amino-acid polypeptide reads, in one-letter code: Small ribosomal subunit protein bS20 (86 aa).

The interval 1–25 (MANIKSQQKRNRTNERARLRNKAVK) is disordered.

Belongs to the bacterial ribosomal protein bS20 family.

Its function is as follows. Binds directly to 16S ribosomal RNA. This is Small ribosomal subunit protein bS20 from Mycobacterium bovis (strain ATCC BAA-935 / AF2122/97).